A 186-amino-acid polypeptide reads, in one-letter code: Large ribosomal subunit protein eL15 (186 aa).

The tract at residues 163–186 (RGLTSAGKKGRGLNKKGKGAEKVR) is disordered. Residues 170–179 (KKGRGLNKKG) are compositionally biased toward basic residues.

It belongs to the eukaryotic ribosomal protein eL15 family.

The protein is Large ribosomal subunit protein eL15 of Methanosphaera stadtmanae (strain ATCC 43021 / DSM 3091 / JCM 11832 / MCB-3).